The chain runs to 341 residues: S-adenosylmethionine:tRNA ribosyltransferase-isomerase (341 aa).

It belongs to the QueA family. Monomer.

It is found in the cytoplasm. It carries out the reaction 7-aminomethyl-7-carbaguanosine(34) in tRNA + S-adenosyl-L-methionine = epoxyqueuosine(34) in tRNA + adenine + L-methionine + 2 H(+). The protein operates within tRNA modification; tRNA-queuosine biosynthesis. In terms of biological role, transfers and isomerizes the ribose moiety from AdoMet to the 7-aminomethyl group of 7-deazaguanine (preQ1-tRNA) to give epoxyqueuosine (oQ-tRNA). The polypeptide is S-adenosylmethionine:tRNA ribosyltransferase-isomerase (Chlorobium chlorochromatii (strain CaD3)).